A 135-amino-acid polypeptide reads, in one-letter code: Fatty acid-binding protein 5 (135 aa).

Residue A2 is modified to N-acetylalanine. At S3 the chain carries Phosphoserine. Residues 24-34 carry the Nuclear localization signal motif; it reads KELGVGLALRK. The 1-eicosanoylglycerol site is built by C43, T56, and R109. The cysteines at positions 120 and 127 are disulfide-linked. 129–131 serves as a coordination point for 1-eicosanoylglycerol; that stretch reads RVY. 129 to 131 is a binding site for (9Z,12Z)-octadecadienoate; the sequence is RVY. Y131 is a binding site for hexadecanoate. Y131 lines the N-eicosanoyl ethanolamine pocket. Y131 is subject to Phosphotyrosine.

The protein belongs to the calycin superfamily. Fatty-acid binding protein (FABP) family. In terms of assembly, monomer. As to expression, widely expressed.

The protein localises to the cytoplasm. It is found in the nucleus. Its subcellular location is the synapse. The protein resides in the postsynaptic density. It localises to the secreted. The catalysed reaction is hexadecanoate(out) = hexadecanoate(in). The enzyme catalyses (9Z,12Z)-octadecadienoate(out) = (9Z,12Z)-octadecadienoate(in). It carries out the reaction (9Z)-octadecenoate(out) = (9Z)-octadecenoate(in). Intracellular carrier for long-chain fatty acids and related active lipids, such as endocannabinoids, that regulate the metabolism and actions of the ligands they bind. In addition to the cytosolic transport, selectively delivers specific fatty acids from the cytosol to the nucleus, wherein they activate nuclear receptors. Delivers retinoic acid to the nuclear receptor peroxisome proliferator-activated receptor delta; which promotes proliferation and survival. May also serve as a synaptic carrier of endocannabinoid at central synapses and thus controls retrograde endocannabinoid signaling. Modulates inflammation by regulating PTGES induction via NF-kappa-B activation, and prostaglandin E2 (PGE2) biosynthesis during inflammation. May be involved in keratinocyte differentiation. In Mus musculus (Mouse), this protein is Fatty acid-binding protein 5.